The chain runs to 673 residues: Annexin A6 (673 aa).

An N-acetylalanine modification is found at A2. A Phosphoserine modification is found at S13. Annexin repeat units follow at residues 20–91 (FDAN…NLMR), 92–163 (PLAY…VLLQ), 175–247 (DLVQ…AVVK), 251–322 (STPE…KLCG), 363–434 (FNPD…GLMM), 435–506 (PPAH…SLAT), 521–595 (EDAQ…AIVQ), and 599–670 (NKPL…ALCG). At Y30 the chain carries Phosphotyrosine. Residues K63, K68, K75, and K81 each carry the N6-acetyllysine modification. Y201 carries the post-translational modification Phosphotyrosine. N6-acetyllysine occurs at positions 306, 370, and 418. S422 carries the post-translational modification Phosphoserine. Position 483 is an N6-acetyllysine (K483). S537 bears the Phosphoserine mark. An N6-acetyllysine modification is found at K620.

It belongs to the annexin family.

Its subcellular location is the cytoplasm. The protein resides in the melanosome. Functionally, may associate with CD21. May regulate the release of Ca(2+) from intracellular stores. This chain is Annexin A6 (Anxa6), found in Mus musculus (Mouse).